Here is a 759-residue protein sequence, read N- to C-terminus: uncharacterized protein (759 aa).

Residues 352 to 556 enclose the MCM domain; sequence VIQKLSDYAF…KDEDIADFSI (205 aa). 397–404 is an ATP binding site; the sequence is SDPGVGKS.

Belongs to the MCM family.

This is an uncharacterized protein from Methanocaldococcus jannaschii (strain ATCC 43067 / DSM 2661 / JAL-1 / JCM 10045 / NBRC 100440) (Methanococcus jannaschii).